The primary structure comprises 428 residues: Glutamate-1-semialdehyde 2,1-aminomutase (428 aa).

Lys265 bears the N6-(pyridoxal phosphate)lysine mark.

The protein belongs to the class-III pyridoxal-phosphate-dependent aminotransferase family. HemL subfamily. Homodimer. Pyridoxal 5'-phosphate serves as cofactor.

It is found in the cytoplasm. It catalyses the reaction (S)-4-amino-5-oxopentanoate = 5-aminolevulinate. It participates in porphyrin-containing compound metabolism; protoporphyrin-IX biosynthesis; 5-aminolevulinate from L-glutamyl-tRNA(Glu): step 2/2. In Legionella pneumophila (strain Paris), this protein is Glutamate-1-semialdehyde 2,1-aminomutase.